The sequence spans 49 residues: DNA-directed RNA polymerase subunit Rpo12 (49 aa).

Zn(2+) is bound by residues Cys-11, Cys-27, and Cys-30.

This sequence belongs to the archaeal Rpo12/eukaryotic RPC10 RNA polymerase subunit family. Part of the RNA polymerase complex. Zn(2+) serves as cofactor.

The protein localises to the cytoplasm. The protein resides in the chromosome. The catalysed reaction is RNA(n) + a ribonucleoside 5'-triphosphate = RNA(n+1) + diphosphate. Functionally, DNA-dependent RNA polymerase (RNAP) catalyzes the transcription of DNA into RNA using the four ribonucleoside triphosphates as substrates. This Thermococcus kodakarensis (strain ATCC BAA-918 / JCM 12380 / KOD1) (Pyrococcus kodakaraensis (strain KOD1)) protein is DNA-directed RNA polymerase subunit Rpo12.